The chain runs to 366 residues: Proline-rich protein 19 (366 aa).

Disordered stretches follow at residues 1-53, 102-149, 256-286, and 301-338; these read MDPR…RDPC, ESHT…DLPV, TPAH…AAWG, and ATPP…WSPN. Residues 18–29 are compositionally biased toward basic residues; it reads GRIRRRKTRRER. 2 stretches are compositionally biased toward polar residues: residues 104–113 and 256–265; these read HTPQLPTKPS and TPAHRGSQVQ. The segment covering 275–286 has biased composition (low complexity); that stretch reads SSASSPSGAAWG. The span at 302 to 326 shows a compositional bias: pro residues; sequence TPPPPPPQPWDVRPPQPLPQPPSPL.

As to quaternary structure, interacts with CNTD1. Preferentially expressed in gonads.

It is found in the nucleus. Its subcellular location is the chromosome. Promotes meiotic crossing over formation through its interaction with CNTD1 by participating in the crossover differentiation step of crossover-specific recombination intermediates. This chain is Proline-rich protein 19, found in Mus musculus (Mouse).